The following is a 129-amino-acid chain: Putative transmembrane protein 10 (129 aa).

Helical transmembrane passes span 3–23 (NFSYFSTIFSIALMSSNAFAG), 27–47 (LLVGFCPCIEINTLTLFLSSL), and 85–105 (SSVLSCFTSCFVIYFYPFFVF).

It is found in the host membrane. The polypeptide is Putative transmembrane protein 10 (SIFV0010) (Sulfolobus islandicus filamentous virus (isolate Iceland/Hveragerdi) (SIFV)).